A 1480-amino-acid polypeptide reads, in one-letter code: Cystic fibrosis transmembrane conductance regulator (1480 aa).

Over 1-77 the chain is Cytoplasmic; the sequence is MQRSPLEKAS…KLINALRRCF (77 aa). Residues 78–98 form a helical membrane-spanning segment; sequence FWRFMFYGIFLYLGEVTKAVQ. An ABC transmembrane type-1 1 domain is found at 81 to 365; sequence FMFYGIFLYL…WAVQTWYDSL (285 aa). At 99–122 the chain is on the extracellular side; the sequence is PLLLGRIIASYDPDNKEERSIAIY. The helical transmembrane segment at 123–146 threads the bilayer; the sequence is LGIGLCLLFIVRTLLLHPAIFGLH. Residues 147–195 are Cytoplasmic-facing; the sequence is HIGMQMRIAMFSLIYKKTLKLSSRVLDKISIGQLVSLLSNNLNKFDEGL. The helical transmembrane segment at 196–216 threads the bilayer; the sequence is ALAHFVWIAPLQVALLMGLIW. At 217–222 the chain is on the extracellular side; sequence ELLQAS. Residues 223–243 form a helical membrane-spanning segment; that stretch reads AFCGLGFLIVLALFQAGLGRM. The Cytoplasmic segment spans residues 244–298; that stretch reads MMKYRDQRAGKISERLVITSEMIENIQSVKAYCWEEAMEKMIENLRQTELKLTRK. The chain crosses the membrane as a helical span at residues 299–319; the sequence is AAYVRYFNSSAFFFSGFFVVF. Over 320 to 339 the chain is Extracellular; the sequence is LSVLPYALIKGIILRKIFTT. Residues 340–358 form a helical membrane-spanning segment; sequence ISFCIVLRMAVTRQFPWAV. The Cytoplasmic segment spans residues 359 to 858; it reads QTWYDSLGAI…YLRYITVHKS (500 aa). ATP-binding positions include Trp401, Ser434, 458–465, and Gln493; that span reads GSTGAGKT. Positions 423–646 constitute an ABC transporter 1 domain; it reads NGDDSLFFSN…QPDFSSKLMG (224 aa). Cys524 carries S-palmitoyl cysteine lipidation. Ser549 bears the Phosphoserine mark. The interval 654-831 is disordered R region; that stretch reads SAERRNSILT…EEINEEDLKE (178 aa). Residues Ser660 and Ser670 each carry the phosphoserine; by PKA modification. Ser686 carries the post-translational modification Phosphoserine; by PKC. Lys688 is covalently cross-linked (Glycyl lysine isopeptide (Lys-Gly) (interchain with G-Cter in ubiquitin)). A phosphoserine; by PKA mark is found at Ser700 and Ser712. The residue at position 717 (Thr717) is a Phosphothreonine. Residues Ser737, Ser753, and Ser768 each carry the phosphoserine; by PKA modification. A Phosphoserine; by PKC modification is found at Ser790. 2 positions are modified to phosphoserine; by PKA: Ser795 and Ser813. The chain crosses the membrane as a helical span at residues 859–879; sequence LIFVLIWCLVIFLAEVAASLV. The ABC transmembrane type-1 2 domain occupies 859–1155; sequence LIFVLIWCLV…AVNSSIDVDS (297 aa). Residues 880–918 are Extracellular-facing; the sequence is VLWLLGNTPLQDKGNSTHSRNNSYAVIITSTSSYYVFYI. N-linked (GlcNAc...) asparagine glycosylation is found at Asn894 and Asn900. The discontinuously helical transmembrane segment at 919 to 939 threads the bilayer; it reads YVGVADTLLAMGFFRGLPLVH. The Cytoplasmic portion of the chain corresponds to 940–990; the sequence is TLITVSKILHHKMLHSVLQAPMSTLNTLKAGGILNRFSKDIAILDDLLPLT. Residues 991–1011 traverse the membrane as a helical segment; it reads IFDFIQLLLIVIGAIAVVAVL. Topologically, residues 1012–1013 are extracellular; that stretch reads QP. The chain crosses the membrane as a helical span at residues 1014–1034; sequence YIFVATVPVIVAFIMLRAYFL. Residues 1035–1095 lie on the Cytoplasmic side of the membrane; the sequence is QTSQQLKQLE…TANWFLYLST (61 aa). Residues 1096-1116 traverse the membrane as a helical segment; sequence LRWFQMRIEMIFVIFFIAVTF. Residues 1117–1130 lie on the Extracellular side of the membrane; sequence ISILTTGEGEGRVG. The chain crosses the membrane as a helical span at residues 1131-1151; the sequence is IILTLAMNIMSTLQWAVNSSI. The Cytoplasmic portion of the chain corresponds to 1152 to 1480; the sequence is DVDSLMRSVS…TEEEVQDTRL (329 aa). In terms of domain architecture, ABC transporter 2 spans 1210–1443; it reads MTVKDLTAKY…RSLFRQAISP (234 aa). ATP-binding positions include Tyr1219 and 1244-1251; that span reads GRTGSGKS. The interval 1386 to 1480 is interaction with GORASP2; it reads RTLKQAFADC…TEEEVQDTRL (95 aa). Cys1395 carries S-palmitoyl cysteine lipidation. Residues Ser1444 and Ser1456 each carry the phosphoserine modification. Residues 1452-1480 are disordered; it reads HRNSSKCKSKPQIAALKEETEEEVQDTRL. Acidic residues predominate over residues 1470–1480; sequence ETEEEVQDTRL. The PDZ-binding signature appears at 1478–1480; that stretch reads TRL.

The protein belongs to the ABC transporter superfamily. ABCC family. CFTR transporter (TC 3.A.1.202) subfamily. As to quaternary structure, monomer; does not require oligomerization for channel activity. May form oligomers in the membrane. Interacts with SLC26A3, SLC26A6 and SHANK2. Interacts with NHERF1 and MYO6. Interacts (via C-terminus) with GOPC (via PDZ domain); this promotes CFTR internalization and thereby decreases channel activity. Interacts with SLC4A7 through NHERF1. Found in a complex with MYO5B and RAB11A. Interacts with ANO1. Interacts with SLC26A8. Interacts with AHCYL1; the interaction increases CFTR activity. Interacts with CSE1L. The core-glycosylated form interacts with GORASP2 (via PDZ GRASP-type 1 domain) in respone to ER stress. Interacts with MARCHF2; the interaction leads to CFTR ubiqtuitination and degradation. Interacts with ADGRG2. N-glycosylated. Post-translationally, phosphorylated; cAMP treatment promotes phosphorylation and activates the channel. Dephosphorylation decreases the ATPase activity (in vitro). Phosphorylation at PKA sites activates the channel. Phosphorylation at PKC sites enhances the response to phosphorylation by PKA. Phosphorylated by AMPK; this inhibits channel activity. In terms of processing, ubiquitinated, leading to its degradation in the lysosome. Deubiquitination by USP10 in early endosomes enhances its endocytic recycling to the cell membrane. Ubiquitinated by RNF185 during ER stress. Ubiquitinated by MARCHF2. In terms of tissue distribution, expressed in the respiratory airway, including bronchial epithelium, and in the female reproductive tract, including oviduct (at protein level). Detected in pancreatic intercalated ducts in the exocrine tissue, on epithelial cells in intralobular striated ducts in sublingual salivary glands, on apical membranes of crypt cells throughout the small and large intestine, and on the reabsorptive duct in eccrine sweat glands. Detected on the equatorial segment of the sperm head (at protein level). Detected in nasal and bronchial superficial epithelium. Expressed by the central cells on the sebaceous glands, dermal adipocytes and, at lower levels, by epithelial cells.

It is found in the apical cell membrane. The protein localises to the early endosome membrane. Its subcellular location is the cell membrane. The protein resides in the recycling endosome membrane. It localises to the endoplasmic reticulum membrane. It is found in the nucleus. The catalysed reaction is ATP + H2O + closed Cl(-) channel = ADP + phosphate + open Cl(-) channel.. The enzyme catalyses chloride(in) = chloride(out). It catalyses the reaction hydrogencarbonate(in) = hydrogencarbonate(out). It carries out the reaction ATP + H2O = ADP + phosphate + H(+). Its function is as follows. Epithelial ion channel that plays an important role in the regulation of epithelial ion and water transport and fluid homeostasis. Mediates the transport of chloride ions across the cell membrane. Possesses an intrinsic ATPase activity and utilizes ATP to gate its channel; the passive flow of anions through the channel is gated by cycles of ATP binding and hydrolysis by the ATP-binding domains. The ion channel is also permeable to HCO(3)(-); selectivity depends on the extracellular chloride concentration. In vitro, mediates ATP-dependent glutathione flux. Exerts its function also by modulating the activity of other ion channels and transporters. Plays an important role in airway fluid homeostasis. Contributes to the regulation of the pH and the ion content of the airway surface fluid layer and thereby plays an important role in defense against pathogens. Modulates the activity of the epithelial sodium channel (ENaC) complex, in part by regulating the cell surface expression of the ENaC complex. Inhibits the activity of the ENaC channel containing subunits SCNN1A, SCNN1B and SCNN1G. Inhibits the activity of the ENaC channel containing subunits SCNN1D, SCNN1B and SCNN1G, but not of the ENaC channel containing subunits SCNN1A, SCNN1B and SCNN1G. May regulate bicarbonate secretion and salvage in epithelial cells by regulating the transporter SLC4A7. Can inhibit the chloride channel activity of ANO1. Plays a role in the chloride and bicarbonate homeostasis during sperm epididymal maturation and capacitation. In Homo sapiens (Human), this protein is Cystic fibrosis transmembrane conductance regulator.